Here is a 530-residue protein sequence, read N- to C-terminus: Ubiquitin carboxyl-terminal hydrolase 17-like protein 24 (530 aa).

The USP domain maps to 80–375; that stretch reads AGLQNMGNTC…QAYVLFYIQK (296 aa). Catalysis depends on Cys89, which acts as the Nucleophile. The active-site Proton acceptor is His334. Composition is skewed to basic and acidic residues over residues 382–392 and 398–412; these read SESVSRGREPR and DTDRRATQGELKRDH. 2 disordered regions span residues 382 to 412 and 477 to 530; these read SESVSRGREPRALGAEDTDRRATQGELKRDH and NHHP…LVCQ. The span at 493–505 shows a compositional bias: polar residues; it reads TPTHQESMNTGTL. Basic residues predominate over residues 510-524; the sequence is GRARRSKGKNKHSKR.

This sequence belongs to the peptidase C19 family. USP17 subfamily. As to expression, expressed in heart, brain, liver and skeletal muscle.

It is found in the nucleus. Its subcellular location is the nucleolus. The protein resides in the endoplasmic reticulum. It catalyses the reaction Thiol-dependent hydrolysis of ester, thioester, amide, peptide and isopeptide bonds formed by the C-terminal Gly of ubiquitin (a 76-residue protein attached to proteins as an intracellular targeting signal).. In terms of biological role, deubiquitinating enzyme that removes conjugated ubiquitin from specific proteins to regulate different cellular processes that may include cell proliferation, progression through the cell cycle, apoptosis, cell migration, and the cellular response to viral infection. The polypeptide is Ubiquitin carboxyl-terminal hydrolase 17-like protein 24 (USP17L24) (Homo sapiens (Human)).